A 198-amino-acid chain; its full sequence is tRNA(Phe) 7-((3-amino-3-carboxypropyl)-4-demethylwyosine(37)-N(4))-methyltransferase 1 (198 aa).

This sequence belongs to the TYW3 family.

The enzyme catalyses 4-demethyl-7-[(3S)-3-amino-3-carboxypropyl]wyosine(37) in tRNA(Phe) + S-adenosyl-L-methionine = 7-[(3S)-3-amino-3-carboxypropyl]wyosine(37) in tRNA(Phe) + S-adenosyl-L-homocysteine + H(+). Its function is as follows. S-adenosyl-L-methionine-dependent methyltransferase that acts as a component of the wyosine derivatives biosynthesis pathway. Probably methylates N-4 position of wybutosine-86 to produce wybutosine-72. The polypeptide is tRNA(Phe) 7-((3-amino-3-carboxypropyl)-4-demethylwyosine(37)-N(4))-methyltransferase 1 (Thermococcus kodakarensis (strain ATCC BAA-918 / JCM 12380 / KOD1) (Pyrococcus kodakaraensis (strain KOD1))).